The following is a 491-amino-acid chain: Glutamate--tRNA ligase (491 aa).

The 'HIGH' region motif lies at 14-24 (PSPTGSPHVGL). 4 residues coordinate Zn(2+): cysteine 111, cysteine 113, cysteine 136, and aspartate 138. The 'KMSKS' region signature appears at 257–261 (KLSKR). Lysine 260 serves as a coordination point for ATP.

It belongs to the class-I aminoacyl-tRNA synthetase family. Glutamate--tRNA ligase type 1 subfamily. In terms of assembly, monomer. Requires Zn(2+) as cofactor.

It localises to the cytoplasm. The enzyme catalyses tRNA(Glu) + L-glutamate + ATP = L-glutamyl-tRNA(Glu) + AMP + diphosphate. Catalyzes the attachment of glutamate to tRNA(Glu) in a two-step reaction: glutamate is first activated by ATP to form Glu-AMP and then transferred to the acceptor end of tRNA(Glu). The polypeptide is Glutamate--tRNA ligase (Nocardioides sp. (strain ATCC BAA-499 / JS614)).